We begin with the raw amino-acid sequence, 629 residues long: tRNA uridine 5-carboxymethylaminomethyl modification enzyme MnmG (629 aa).

Residues 13–18, Val-125, and Ser-180 contribute to the FAD site; that span reads GGGHAG. 273–287 lines the NAD(+) pocket; sequence GPRYCPSIEDKVMRF. Gln-370 contributes to the FAD binding site.

It belongs to the MnmG family. Homodimer. Heterotetramer of two MnmE and two MnmG subunits. It depends on FAD as a cofactor.

Its subcellular location is the cytoplasm. Its function is as follows. NAD-binding protein involved in the addition of a carboxymethylaminomethyl (cmnm) group at the wobble position (U34) of certain tRNAs, forming tRNA-cmnm(5)s(2)U34. This Klebsiella pneumoniae subsp. pneumoniae (strain ATCC 700721 / MGH 78578) protein is tRNA uridine 5-carboxymethylaminomethyl modification enzyme MnmG.